Here is a 199-residue protein sequence, read N- to C-terminus: Fe/S biogenesis protein NfuA (199 aa).

2 residues coordinate [4Fe-4S] cluster: cysteine 151 and cysteine 154.

The protein belongs to the NfuA family. In terms of assembly, homodimer. The cofactor is [4Fe-4S] cluster.

Its function is as follows. Involved in iron-sulfur cluster biogenesis. Binds a 4Fe-4S cluster, can transfer this cluster to apoproteins, and thereby intervenes in the maturation of Fe/S proteins. Could also act as a scaffold/chaperone for damaged Fe/S proteins. The polypeptide is Fe/S biogenesis protein NfuA (Xylella fastidiosa (strain 9a5c)).